The chain runs to 446 residues: Glutamyl-tRNA reductase (446 aa).

Residues 49–52 (TCNR), serine 109, 114–116 (ETQ), and glutamine 120 each bind substrate. Cysteine 50 functions as the Nucleophile in the catalytic mechanism. Position 189-194 (189-194 (GAGEMA)) interacts with NADP(+).

The protein belongs to the glutamyl-tRNA reductase family. In terms of assembly, homodimer.

The enzyme catalyses (S)-4-amino-5-oxopentanoate + tRNA(Glu) + NADP(+) = L-glutamyl-tRNA(Glu) + NADPH + H(+). It functions in the pathway porphyrin-containing compound metabolism; protoporphyrin-IX biosynthesis; 5-aminolevulinate from L-glutamyl-tRNA(Glu): step 1/2. Functionally, catalyzes the NADPH-dependent reduction of glutamyl-tRNA(Glu) to glutamate 1-semialdehyde (GSA). This Macrococcus caseolyticus (strain JCSC5402) (Macrococcoides caseolyticum) protein is Glutamyl-tRNA reductase.